The chain runs to 66 residues: Small archaeal modifier protein 2 (66 aa).

Lys-58 is covalently cross-linked (Glycyl lysine isopeptide (Lys-Gly) (interchain with G-Cter in SAMP2)). A 1-thioglycine; alternate modification is found at Gly-66. The residue at position 66 (Gly-66) is a Glycyl adenylate; alternate. Gly-66 participates in a covalent cross-link: Glycyl lysine isopeptide (Gly-Lys) (interchain with K-? in acceptor proteins); alternate.

Monomer. Monomeric and polymeric forms interact with NcsA. In terms of processing, the C-terminal glycine is likely acyl-adenylated (-COAMP) by UbaA, and also probably thiocarboxylated (-COSH) to function in sulfur transfer.

Its function is as follows. Functions as a protein modifier covalently attached to lysine residues of substrate proteins, as well as a sulfur carrier in tRNA thiolation. The protein modification process is termed sampylation and involves the formation of an isopeptide bond between the SAMP2 C-terminal glycine carboxylate and the epsilon-amino group of lysine residues on target proteins. Is able to form polymeric chains with itself at Lys-58, similar to ubiquitin and other ubiquitin-like proteins. May serve as a proteolytic signal in the cell to target proteins for degradation by proteasomes. This chain is Small archaeal modifier protein 2 (samp2), found in Haloferax volcanii (strain ATCC 29605 / DSM 3757 / JCM 8879 / NBRC 14742 / NCIMB 2012 / VKM B-1768 / DS2) (Halobacterium volcanii).